A 937-amino-acid polypeptide reads, in one-letter code: MSEMVDLKEFLAELGKTQKELKNVIEQAKDIGLELKTNSKMTPEEANKLYKYIVEGIKEQIQANQPAKNPEQDNKDDLNTAVASKPLNKKVSKTPKKEEKSQPKPKKTKEKKKEAPTPIAKKKGGIEIVNTFENQTPPVENNPKVVSHSQIEKAKQKLQEIQKSREALNKLTQSNANNAKKEISEVKKQEQEIKRHENIKRRTGFRVIKRNDEVENESENSVTESKKPTQSAAAIFEDIKKEWQEKDKQEAKKAKKPSKPKATPTAKNNKSHKIDFSDARDFKGNDIYDDETDEILLFDLHEQDNFNKEEEEKEIRQNINDRVRVQRKNPWMNESGIKRQSKKKRAFRNDNSQKVIQSAIAIPEEVRVYEFAQKANLNLADVIKTLFNLGLMVTKNDFLDKDSIEILAEEFHLEISVQNTLEEFEVEEVLEGVKKERPPVVTIMGHVDHGKTSLLDKIRDKRVAHTEAGGITQHIGAYMVEKNGKWVSFIDTPGHEAFSQMRNRGAQVTDIAVIVIAADDGVKQQTIEALEHAKAANVPVIFAMNKMDKPNVNPDKLKAECAELGYNPVDWGGEHEFIPVSAKTGDGIDNLLETILIQADIMELKAIEEGSARAVVLEGSVEKGRGAVATVIVQSGTLSVGDSFFAETAFGKVRTMTDDQGKSIQNLKPSMVALITGLSEVPPAGSVLIGVENDSIARLQAQKRATYLRQKALSKSTKVSFDELSEMVANKELKNIPVVIKADTQGSLEAIKNSLLELNNEEVAIQVIHSGVGGITENDLSLVSSSDHAVILGFNIRPTGNVKNKAKEYNVSIKTYTVIYALIEEMRSLLLGLMSPIIEEEHTGQAEVRETFNIPKVGTIAGCVVSDGVIARGIKARLIRDGVVVHTGEILSLKRFKDDVKEVSKGYECGIMLDNYNEIKVGDVFETYKEIHKKRTL.

Disordered regions lie at residues 61–156 (IQAN…KAKQ) and 171–274 (LTQS…SHKI). Residues 179–196 (AKKEISEVKKQEQEIKRH) show a composition bias toward basic and acidic residues. The span at 197 to 208 (ENIKRRTGFRVI) shows a compositional bias: basic residues. The segment covering 237–252 (EDIKKEWQEKDKQEAK) has biased composition (basic and acidic residues). The tr-type G domain occupies 436–605 (ERPPVVTIMG…LIQADIMELK (170 aa)). The tract at residues 445-452 (GHVDHGKT) is G1. Position 445–452 (445–452 (GHVDHGKT)) interacts with GTP. The interval 470–474 (GITQH) is G2. The tract at residues 491-494 (DTPG) is G3. Residues 491–495 (DTPGH) and 545–548 (NKMD) each bind GTP. The interval 545–548 (NKMD) is G4. Residues 581-583 (SAK) are G5.

It belongs to the TRAFAC class translation factor GTPase superfamily. Classic translation factor GTPase family. IF-2 subfamily.

The protein localises to the cytoplasm. Functionally, one of the essential components for the initiation of protein synthesis. Protects formylmethionyl-tRNA from spontaneous hydrolysis and promotes its binding to the 30S ribosomal subunits. Also involved in the hydrolysis of GTP during the formation of the 70S ribosomal complex. This Helicobacter pylori (strain G27) protein is Translation initiation factor IF-2.